A 711-amino-acid chain; its full sequence is Ecdysone-inducible protein E75 (711 aa).

The segment at residues 44–120 (TVLCRVCGDK…VGMSRDAVRF (77 aa)) is a DNA-binding region (nuclear receptor). NR C4-type zinc fingers lie at residues 47–67 (CRVCGDKASGFHYGVHSCEGC) and 84–108 (CTKNQQCSILRINRNRCQYCRLKKC). Residues 153–400 (DGPRLLARVV…QQMWVEDEGA (248 aa)) enclose the NR LBD domain. Disordered stretches follow at residues 405-432 (SGADDSARSPIGSVSSSESSETTGDCGT), 466-530 (LTVT…DMPV), 559-602 (AMRR…PIRA), and 680-711 (DAPQPLNLSKKSPSPSPPPPPPRSYMPPMLPA). Composition is skewed to basic and acidic residues over residues 511-521 (SLEEHSDDRRP) and 560-572 (MRRDTWSEAEARP). The segment covering 574–590 (RPTPSPQPPHHPHPASP) has biased composition (pro residues). 2 stretches are compositionally biased toward low complexity: residues 591–602 (AHPAHSPRPIRA) and 682–692 (PQPLNLSKKSP). Over residues 693 to 711 (SPSPPPPPPRSYMPPMLPA) the composition is skewed to pro residues.

Belongs to the nuclear hormone receptor family. NR1 subfamily.

It localises to the nucleus. Orphan receptor possibly involved in the regulation of genes in the ecdysteroid cascade. The chain is Ecdysone-inducible protein E75 (E75) from Galleria mellonella (Greater wax moth).